The following is a 478-amino-acid chain: Violaxanthin de-epoxidase, chloroplastic (478 aa).

Residues 388–453 (LVERLEKKVE…RELSKEEMDV (66 aa)) adopt a coiled-coil conformation.

It belongs to the calycin superfamily. Lipocalin family.

Its subcellular location is the plastid. It is found in the chloroplast thylakoid membrane. The catalysed reaction is all-trans-violaxanthin + 2 L-ascorbate = all-trans-zeaxanthin + 2 L-dehydroascorbate + 2 H2O. Part of the xanthophyll (or violaxanthin) cycle for controlling the concentration of zeaxanthin in chloroplasts. Catalyzes the two-step mono de-epoxidation reaction. Stereospecific for all-trans xanthophylls. Zeaxanthin induces the dissipation of excitation energy in the chlorophyll of the light-harvesting protein complex of photosystem II. This chain is Violaxanthin de-epoxidase, chloroplastic (VDE1), found in Nicotiana tabacum (Common tobacco).